Consider the following 90-residue polypeptide: Elongation factor 1-beta (90 aa).

It belongs to the EF-1-beta/EF-1-delta family.

Promotes the exchange of GDP for GTP in EF-1-alpha/GDP, thus allowing the regeneration of EF-1-alpha/GTP that could then be used to form the ternary complex EF-1-alpha/GTP/AAtRNA. The polypeptide is Elongation factor 1-beta (Sulfolobus acidocaldarius (strain ATCC 33909 / DSM 639 / JCM 8929 / NBRC 15157 / NCIMB 11770)).